Consider the following 578-residue polypeptide: ER degradation-enhancing alpha-mannosidase-like protein 2 (578 aa).

The N-terminal stretch at 1–21 (MPFRLLIPLGLLCALLPQHHG) is a signal peptide. Asn90, Asn112, Asn289, and Asn450 each carry an N-linked (GlcNAc...) asparagine glycan. Residues 517-557 (KNTVSSGPWEPPARPGTLFSPENHDQARERKPAKQKVPLLS) are disordered. A compositionally biased stretch (basic and acidic residues) spans 538 to 548 (ENHDQARERKP).

Belongs to the glycosyl hydrolase 47 family. In terms of processing, N-glycosylated. Expressed ubiquitously in all tissues tested with slightly higher levels detected in small intestine and peripheral blood leukocytes and weakest levels in brain and skeletal muscle.

It is found in the endoplasmic reticulum lumen. In terms of biological role, involved in the endoplasmic reticulum-associated degradation (ERAD) pathway that targets misfolded glycoproteins for degradation in an N-glycan-dependent manner. May initiate ERAD by promoting the first mannose trimming step of ERAD substrates, from Man9GlcNAc2 to Man8GlcNAc2. Seems to recognize and bind to exposed hydrophobic regions in target proteins. This is ER degradation-enhancing alpha-mannosidase-like protein 2 (EDEM2) from Homo sapiens (Human).